The sequence spans 179 residues: Large ribosomal subunit protein uL5 (179 aa).

Belongs to the universal ribosomal protein uL5 family. In terms of assembly, part of the 50S ribosomal subunit; part of the 5S rRNA/L5/L18/L25 subcomplex. Contacts the 5S rRNA and the P site tRNA. Forms a bridge to the 30S subunit in the 70S ribosome.

In terms of biological role, this is one of the proteins that bind and probably mediate the attachment of the 5S RNA into the large ribosomal subunit, where it forms part of the central protuberance. In the 70S ribosome it contacts protein S13 of the 30S subunit (bridge B1b), connecting the 2 subunits; this bridge is implicated in subunit movement. Contacts the P site tRNA; the 5S rRNA and some of its associated proteins might help stabilize positioning of ribosome-bound tRNAs. The protein is Large ribosomal subunit protein uL5 of Pseudomonas paraeruginosa (strain DSM 24068 / PA7) (Pseudomonas aeruginosa (strain PA7)).